The primary structure comprises 314 residues: tRNA dimethylallyltransferase (314 aa).

12–19 contacts ATP; that stretch reads GPTASGKT. 14-19 provides a ligand contact to substrate; the sequence is TASGKT. Interaction with substrate tRNA stretches follow at residues 37–40 and 162–166; these read DSAL and QRIIR.

The protein belongs to the IPP transferase family. As to quaternary structure, monomer. Mg(2+) is required as a cofactor.

It catalyses the reaction adenosine(37) in tRNA + dimethylallyl diphosphate = N(6)-dimethylallyladenosine(37) in tRNA + diphosphate. Its function is as follows. Catalyzes the transfer of a dimethylallyl group onto the adenine at position 37 in tRNAs that read codons beginning with uridine, leading to the formation of N6-(dimethylallyl)adenosine (i(6)A). The protein is tRNA dimethylallyltransferase of Acinetobacter baumannii (strain AB0057).